Reading from the N-terminus, the 123-residue chain is Large ribosomal subunit protein bL12 (123 aa).

Lysine 84 carries the N6-methyllysine modification. Positions 94–123 (PATLKEGMSKEDGDEAKTKLEEAGASVELK) are disordered. A compositionally biased stretch (basic and acidic residues) spans 100-115 (GMSKEDGDEAKTKLEE).

Belongs to the bacterial ribosomal protein bL12 family. Homodimer. Part of the ribosomal stalk of the 50S ribosomal subunit. Forms a multimeric L10(L12)X complex, where L10 forms an elongated spine to which 2 to 4 L12 dimers bind in a sequential fashion. Binds GTP-bound translation factors.

Seems to be the binding site for several of the factors involved in protein synthesis and appears to be essential for accurate translation. Functionally, forms part of the ribosomal stalk which helps the ribosome interact with GTP-bound translation factors. Is thus essential for accurate translation. The polypeptide is Large ribosomal subunit protein bL12 (Halophilic eubacterium NRCC 41227).